A 208-amino-acid polypeptide reads, in one-letter code: Large ribosomal subunit protein bL25 (208 aa).

Belongs to the bacterial ribosomal protein bL25 family. CTC subfamily. In terms of assembly, part of the 50S ribosomal subunit; part of the 5S rRNA/L5/L18/L25 subcomplex. Contacts the 5S rRNA. Binds to the 5S rRNA independently of L5 and L18.

This is one of the proteins that binds to the 5S RNA in the ribosome where it forms part of the central protuberance. The polypeptide is Large ribosomal subunit protein bL25 (Leptothrix cholodnii (strain ATCC 51168 / LMG 8142 / SP-6) (Leptothrix discophora (strain SP-6))).